The sequence spans 284 residues: 2-dehydro-3-deoxyphosphooctonate aldolase (284 aa).

This sequence belongs to the KdsA family.

It is found in the cytoplasm. It carries out the reaction D-arabinose 5-phosphate + phosphoenolpyruvate + H2O = 3-deoxy-alpha-D-manno-2-octulosonate-8-phosphate + phosphate. Its pathway is carbohydrate biosynthesis; 3-deoxy-D-manno-octulosonate biosynthesis; 3-deoxy-D-manno-octulosonate from D-ribulose 5-phosphate: step 2/3. It participates in bacterial outer membrane biogenesis; lipopolysaccharide biosynthesis. The chain is 2-dehydro-3-deoxyphosphooctonate aldolase from Aliivibrio fischeri (strain ATCC 700601 / ES114) (Vibrio fischeri).